Reading from the N-terminus, the 147-residue chain is 3-dehydroquinate dehydratase (147 aa).

Residue Tyr-23 is the Proton acceptor of the active site. Substrate contacts are provided by Asn-74, His-80, and Asp-87. His-100 serves as the catalytic Proton donor. Substrate-binding positions include 101 to 102 (LS) and Arg-111.

The protein belongs to the type-II 3-dehydroquinase family. Homododecamer.

It carries out the reaction 3-dehydroquinate = 3-dehydroshikimate + H2O. Its pathway is metabolic intermediate biosynthesis; chorismate biosynthesis; chorismate from D-erythrose 4-phosphate and phosphoenolpyruvate: step 3/7. Functionally, catalyzes a trans-dehydration via an enolate intermediate. The sequence is that of 3-dehydroquinate dehydratase from Glaesserella parasuis serovar 5 (strain SH0165) (Haemophilus parasuis).